The sequence spans 626 residues: Leucine-rich repeat and fibronectin type-III domain-containing protein 3 (626 aa).

The N-terminal stretch at 1 to 16 is a signal peptide; that stretch reads MAVLPLLLCLLPLAPA. The Extracellular portion of the chain corresponds to 17–539; it reads SSPPQPATSS…PHAPFLGGTM (523 aa). One can recognise an LRRNT domain in the interval 19-59; the sequence is PPQPATSSPCPRRCRCQTQSLPLSVLCPGAGLLFVPPSLDR. 6 LRR repeats span residues 84-105, 108-129, 132-153, 157-178, 181-202, and 205-226; these read GLLHLSLSRNTIRHVAAGAFAD, ALRALHLDGNRLTSLGEGQLRG, NLRHLILSNNQLAALAAGALDD, TLEDLDLSYNNLEQLPWEALGR, NVNTLGLDHNLLASVPAGAFSR, and KLARLDMTSNRLTTIPPDPLFS. An LRRCT domain is found at 249–295; it reads NPLHCNCELVWLRRLAREDDLEACASPPALGGRYFWAVGEEEFVCEP. Positions 295 to 382 constitute an Ig-like domain; it reads PPVVTHRSPP…GEATAAVELT (88 aa). Residues 308 to 395 form the Fibronectin type-III 1 domain; sequence PAGRPAALRC…PPPPQLANST (88 aa). Cysteines 317 and 366 form a disulfide. N-linked (GlcNAc...) asparagine glycosylation is found at Asn339, Asn348, and Asn393. Positions 382–423 are disordered; that stretch reads TVGPPPPPQLANSTSCDPPRDGEPDALTPPSAASASAKVADT. Low complexity predominate over residues 406–423; it reads DALTPPSAASASAKVADT. Residues 425-523 enclose the Fibronectin type-III 2 domain; it reads APTDRGVQVT…GCARFSTEPA (99 aa). A helical transmembrane segment spans residues 540-560; it reads IIALGGVIVASVLVFIFVLLL. Residues 561 to 626 lie on the Cytoplasmic side of the membrane; sequence RYKVHGVQPP…WGPSHEPAGP (66 aa).

It belongs to the LRFN family. As to quaternary structure, can form heteromeric complexes with LRFN1, LRFN2, LRFN4 and LRFN5. Able to form homomeric complexes across cell junctions, between adjacent cells. Does not interact with DLG4. In terms of processing, N-glycosylated. As to expression, expressed in brain. Within brain, expressed in hippocampus, cerebellum, olfactory bulb and forebrain (at protein level).

It localises to the cell membrane. The protein localises to the cell projection. The protein resides in the axon. Its subcellular location is the dendrite. It is found in the synapse. It localises to the presynaptic cell membrane. The protein localises to the postsynaptic cell membrane. Functionally, cell adhesion molecule that mediates homophilic cell-cell adhesion in a Ca(2+)-independent manner. Promotes neurite outgrowth in hippocampal neurons. The polypeptide is Leucine-rich repeat and fibronectin type-III domain-containing protein 3 (Rattus norvegicus (Rat)).